A 341-amino-acid chain; its full sequence is Thromboxane A2 receptor (341 aa).

At 1-29 (MWPNGTSLGACFRPVNITLQERRAIASPW) the chain is on the extracellular side. Residues Asn-4 and Asn-16 are each glycosylated (N-linked (GlcNAc...) asparagine). A helical transmembrane segment spans residues 30 to 52 (FAASFCALGLGSNLLALSVLAGA). The Cytoplasmic segment spans residues 53 to 65 (RPGAGPRSSFLAL). Residues 66–86 (LCGLVLTDFLGLLVTGAIVAS) traverse the membrane as a helical segment. At 87–105 (QHAALLDWRATDPSCRLCY) the chain is on the extracellular side. Cys-104 and Cys-181 form a disulfide bridge. Residues 106–127 (FMGVAMVFFGLCPLLLGAAMAS) form a helical membrane-spanning segment. Residues 128 to 147 (ERFVGITRPFSRPTATSRRA) lie on the Cytoplasmic side of the membrane. The helical transmembrane segment at 148–170 (WATVGLVWVAAGALGLLPLLGLG) threads the bilayer. Over 171–191 (RYSVQYPGSWCFLTLGTQRGD) the chain is Extracellular. The chain crosses the membrane as a helical span at residues 192-217 (VVFGLIFALLGSASVGLSLLLNTVSV). At 218 to 244 (ATLCRVYHTREATQRPRDCEVEMMVQL) the chain is on the cytoplasmic side. Residues 245 to 268 (VGIMVVATVCWMPLLVFIMQTLLQ) traverse the membrane as a helical segment. The Extracellular portion of the chain corresponds to 269–287 (TPPVMSFSGQLLRATEHQL). The chain crosses the membrane as a helical span at residues 288–309 (LIYLRVATWNQILDPWVYILFR). At 310–341 (RSVLRRLHPRFSSQLQAVSLRRPPAQAMLSGP) the chain is on the cytoplasmic side. Position 328 is a phosphoserine (Ser-328).

This sequence belongs to the G-protein coupled receptor 1 family. Interacts with RPGRIP1L. Interacts with RACK1; the interaction regulates TBXA2R cell surface expression.

It is found in the cell membrane. Receptor for thromboxane A2 (TXA2), a potent stimulator of platelet aggregation. The activity of this receptor is mediated by a G-protein that activates a phosphatidylinositol-calcium second messenger system. In the kidney, the binding of TXA2 to glomerular TP receptors causes intense vasoconstriction. Activates phospholipase C and adenylyl cyclase. In Mus musculus (Mouse), this protein is Thromboxane A2 receptor (Tbxa2r).